The primary structure comprises 765 residues: Probable dipeptidyl peptidase 4 (765 aa).

The first 14 residues, 1-14 (MKWSILLLVGCAAA), serve as a signal peptide directing secretion. N35, N78, N101, N110, N169, N218, N465, and N490 each carry an N-linked (GlcNAc...) asparagine glycan. The active-site Charge relay system is S613. A glycan (N-linked (GlcNAc...) asparagine) is linked at N665. Catalysis depends on charge relay system residues D690 and H725.

The protein belongs to the peptidase S9B family.

The protein localises to the secreted. The catalysed reaction is Release of an N-terminal dipeptide, Xaa-Yaa-|-Zaa-, from a polypeptide, preferentially when Yaa is Pro, provided Zaa is neither Pro nor hydroxyproline.. Functionally, extracellular dipeptidyl-peptidase which removes N-terminal dipeptides sequentially from polypeptides having unsubstituted N-termini provided that the penultimate residue is proline. Contributes to pathogenicity. This Aspergillus fumigatus (strain ATCC MYA-4609 / CBS 101355 / FGSC A1100 / Af293) (Neosartorya fumigata) protein is Probable dipeptidyl peptidase 4 (dpp4).